A 474-amino-acid chain; its full sequence is ATP synthase subunit beta (474 aa).

An ATP-binding site is contributed by 152–159 (GGAGVGKT).

This sequence belongs to the ATPase alpha/beta chains family. In terms of assembly, F-type ATPases have 2 components, CF(1) - the catalytic core - and CF(0) - the membrane proton channel. CF(1) has five subunits: alpha(3), beta(3), gamma(1), delta(1), epsilon(1). CF(0) has three main subunits: a(1), b(2) and c(9-12). The alpha and beta chains form an alternating ring which encloses part of the gamma chain. CF(1) is attached to CF(0) by a central stalk formed by the gamma and epsilon chains, while a peripheral stalk is formed by the delta and b chains.

It is found in the cell inner membrane. It catalyses the reaction ATP + H2O + 4 H(+)(in) = ADP + phosphate + 5 H(+)(out). Functionally, produces ATP from ADP in the presence of a proton gradient across the membrane. The catalytic sites are hosted primarily by the beta subunits. This Magnetococcus marinus (strain ATCC BAA-1437 / JCM 17883 / MC-1) protein is ATP synthase subunit beta.